Reading from the N-terminus, the 914-residue chain is Eukaryotic translation initiation factor 3 subunit C-like protein (914 aa).

The disordered stretch occupies residues 1–44 (MSRFFTTGSDSESESSLSGEELVTKPVGGNYGKQPLLLSEDEED). The span at 8 to 21 (GSDSESESSLSGEE) shows a compositional bias: low complexity. Phosphoserine occurs at positions 9, 11, 13, 15, 16, 18, and 39. At Lys-99 the chain carries N6-acetyllysine. Disordered regions lie at residues 157–302 (TSYK…GGEW) and 523–543 (QLTP…NEGE). Residues Ser-166, Ser-178, Ser-181, and Ser-182 each carry the phosphoserine modification. A compositionally biased stretch (acidic residues) spans 166–190 (SADEDAEKNEEDSEGSSDEDEDEDG). Basic and acidic residues predominate over residues 199–216 (KKSEAPSGESRKFLKKMD). The span at 217–232 (DEDEDSEDSEDDEDWD) shows a compositional bias: acidic residues. The segment covering 261–278 (PTTDEDKKAAEKKREDKA) has biased composition (basic and acidic residues). Over residues 291–300 (EEEEEDNEGG) the composition is skewed to acidic residues. The segment covering 523–532 (QLTPPEGSSK) has biased composition (polar residues). Residue Thr-525 is modified to Phosphothreonine. N6-acetyllysine is present on Lys-644. The region spanning 674–850 (FHLHINLELL…QTVVMHRTEP (177 aa)) is the PCI domain. A disordered region spans residues 886–914 (FRDQKDGYRKNEGYMRRGGYRQQQSQTAY). Positions 887–900 (RDQKDGYRKNEGYM) are enriched in basic and acidic residues. Ser-910 carries the post-translational modification Phosphoserine.

The protein belongs to the eIF-3 subunit C family. Component of the eukaryotic translation initiation factor 3 (eIF-3) complex, which is composed of 13 subunits: EIF3A, EIF3B, EIF3C, EIF3D, EIF3E, EIF3F, EIF3G, EIF3H, EIF3I, EIF3J, EIF3K, EIF3L and EIF3M. The eIF-3 complex appears to include 3 stable modules: module A is composed of EIF3A, EIF3B, EIF3G and EIF3I; module B is composed of EIF3F, EIF3H, and EIF3M; and module C is composed of EIF3C, EIF3D, EIF3E, EIF3K and EIF3L. EIF3C of module C binds EIF3B of module A and EIF3H of module B, thereby linking the three modules. EIF3J is a labile subunit that binds to the eIF-3 complex via EIF3B. The eIF-3 complex interacts with RPS6KB1 under conditions of nutrient depletion. Mitogenic stimulation leads to binding and activation of a complex composed of MTOR and RPTOR, leading to phosphorylation and release of RPS6KB1 and binding of EIF4B to eIF-3. Post-translationally, phosphorylated. Phosphorylation is enhanced upon serum stimulation.

The protein localises to the cytoplasm. Functionally, component of the eukaryotic translation initiation factor 3 (eIF-3) complex, which is required for several steps in the initiation of protein synthesis. The eIF-3 complex associates with the 40S ribosome and facilitates the recruitment of eIF-1, eIF-1A, eIF-2:GTP:methionyl-tRNAi and eIF-5 to form the 43S pre-initiation complex (43S PIC). The eIF-3 complex stimulates mRNA recruitment to the 43S PIC and scanning of the mRNA for AUG recognition. The eIF-3 complex is also required for disassembly and recycling of post-termination ribosomal complexes and subsequently prevents premature joining of the 40S and 60S ribosomal subunits prior to initiation. The eIF-3 complex specifically targets and initiates translation of a subset of mRNAs involved in cell proliferation, including cell cycling, differentiation and apoptosis, and uses different modes of RNA stem-loop binding to exert either translational activation or repression. The sequence is that of Eukaryotic translation initiation factor 3 subunit C-like protein (EIF3CL) from Homo sapiens (Human).